The following is a 523-amino-acid chain: 2-isopropylmalate synthase (523 aa).

One can recognise a Pyruvate carboxyltransferase domain in the interval 5–267 (VIIFDTTLRD…HTAINHQEIW (263 aa)). Mn(2+) contacts are provided by Asp14, His202, His204, and Asn238. The tract at residues 392-523 (RLDYFSVQSG…QHNENNKETV (132 aa)) is regulatory domain.

It belongs to the alpha-IPM synthase/homocitrate synthase family. LeuA type 1 subfamily. In terms of assembly, homodimer. It depends on Mn(2+) as a cofactor.

It localises to the cytoplasm. The enzyme catalyses 3-methyl-2-oxobutanoate + acetyl-CoA + H2O = (2S)-2-isopropylmalate + CoA + H(+). It participates in amino-acid biosynthesis; L-leucine biosynthesis; L-leucine from 3-methyl-2-oxobutanoate: step 1/4. Catalyzes the condensation of the acetyl group of acetyl-CoA with 3-methyl-2-oxobutanoate (2-ketoisovalerate) to form 3-carboxy-3-hydroxy-4-methylpentanoate (2-isopropylmalate). The sequence is that of 2-isopropylmalate synthase from Escherichia coli O81 (strain ED1a).